The sequence spans 187 residues: NADH-quinone oxidoreductase subunit C 2 (187 aa).

The tract at residues Y153–S187 is disordered.

It belongs to the complex I 30 kDa subunit family. NDH-1 is composed of 14 different subunits. Subunits NuoB, C, D, E, F, and G constitute the peripheral sector of the complex.

It localises to the cell inner membrane. The enzyme catalyses a quinone + NADH + 5 H(+)(in) = a quinol + NAD(+) + 4 H(+)(out). Its function is as follows. NDH-1 shuttles electrons from NADH, via FMN and iron-sulfur (Fe-S) centers, to quinones in the respiratory chain. The immediate electron acceptor for the enzyme in this species is believed to be ubiquinone. Couples the redox reaction to proton translocation (for every two electrons transferred, four hydrogen ions are translocated across the cytoplasmic membrane), and thus conserves the redox energy in a proton gradient. The protein is NADH-quinone oxidoreductase subunit C 2 of Rhizobium etli (strain CIAT 652).